The primary structure comprises 53 residues: Beta-defensin C7 (53 aa).

3 disulfides stabilise this stretch: Cys-20/Cys-49, Cys-27/Cys-42, and Cys-32/Cys-50.

It belongs to the beta-defensin family.

The protein localises to the secreted. Has bactericidal activity. This Bos taurus (Bovine) protein is Beta-defensin C7.